Reading from the N-terminus, the 326-residue chain is Protein GVP36 (326 aa).

Serine 2 is subject to N-acetylserine. Phosphoserine is present on serine 2. Glycyl lysine isopeptide (Lys-Gly) (interchain with G-Cter in ubiquitin) cross-links involve residues lysine 13, lysine 305, and lysine 313. The tract at residues 299 to 326 (AEEPEAKPEVAEEEKPQTAISMNDEDDA) is disordered. Residues 302–314 (PEAKPEVAEEEKP) show a composition bias toward basic and acidic residues. Position 319 is a phosphoserine (serine 319).

Its subcellular location is the golgi apparatus membrane. This chain is Protein GVP36 (GVP36), found in Saccharomyces cerevisiae (strain ATCC 204508 / S288c) (Baker's yeast).